Consider the following 443-residue polypeptide: MKAVLPDSKMPKRWYNILPDLPEPLAPPLDPETDEPMESEKLLRIFASELVKQEMSMERYIDIPKKVRELYAKIGRPTPLFRATNLEKALETPARIYFKYEGATVTGSHKINTALAQAYYAKKQGIERLVTETGAGQWGTALSLAGALMGINVRVYMARASFYQKPYRKTIMRLYGAEIYPSPSDRTEIGRKFLSEDPNHPGGLGIAISEAIEDVLRDEKARYALGSVLNHVLMHQTVIGLEAKEQMKEFEDPDVIIGCVGGGSNFAGLAYPFVKDRLDGKADYEFIAVEPRAAPSMTRGVYTYDYGDSGGLTPKMKMHTLGHTYYVPPIHAGGLRYHGLAPTLSILINHGIVRPVAYHQTEVFEAARLFAKTEGIVPAPESAHAVKAAIDRALKAKEEGKEEVILFNLSGHGLLDLKGYEDFLDGKLEDYEPEELPALRGEV.

Lysine 110 carries the N6-(pyridoxal phosphate)lysine modification.

This sequence belongs to the TrpB family. Tetramer of two alpha and two beta chains. Pyridoxal 5'-phosphate is required as a cofactor.

It carries out the reaction (1S,2R)-1-C-(indol-3-yl)glycerol 3-phosphate + L-serine = D-glyceraldehyde 3-phosphate + L-tryptophan + H2O. Its pathway is amino-acid biosynthesis; L-tryptophan biosynthesis; L-tryptophan from chorismate: step 5/5. Its function is as follows. The beta subunit is responsible for the synthesis of L-tryptophan from indole and L-serine. The polypeptide is Tryptophan synthase beta chain (Thermococcus onnurineus (strain NA1)).